The sequence spans 152 residues: Xanthine-guanine phosphoribosyltransferase (152 aa).

Residues Arg-37–Gly-38, Arg-69, and Asp-88–Thr-96 each bind 5-phospho-alpha-D-ribose 1-diphosphate. Residue Arg-69 coordinates GMP. Asp-89 contributes to the Mg(2+) binding site. The guanine site is built by Asp-92 and Ile-135. 2 residues coordinate xanthine: Asp-92 and Ile-135. GMP contacts are provided by residues Asp-92–Thr-96 and Trp-134–Ile-135.

The protein belongs to the purine/pyrimidine phosphoribosyltransferase family. XGPT subfamily. In terms of assembly, homotetramer. Mg(2+) serves as cofactor.

It localises to the cell inner membrane. It carries out the reaction GMP + diphosphate = guanine + 5-phospho-alpha-D-ribose 1-diphosphate. The catalysed reaction is XMP + diphosphate = xanthine + 5-phospho-alpha-D-ribose 1-diphosphate. It catalyses the reaction IMP + diphosphate = hypoxanthine + 5-phospho-alpha-D-ribose 1-diphosphate. It functions in the pathway purine metabolism; GMP biosynthesis via salvage pathway; GMP from guanine: step 1/1. It participates in purine metabolism; XMP biosynthesis via salvage pathway; XMP from xanthine: step 1/1. In terms of biological role, purine salvage pathway enzyme that catalyzes the transfer of the ribosyl-5-phosphate group from 5-phospho-alpha-D-ribose 1-diphosphate (PRPP) to the N9 position of the 6-oxopurines guanine and xanthine to form the corresponding ribonucleotides GMP (guanosine 5'-monophosphate) and XMP (xanthosine 5'-monophosphate), with the release of PPi. To a lesser extent, also acts on hypoxanthine. The polypeptide is Xanthine-guanine phosphoribosyltransferase (Escherichia fergusonii (strain ATCC 35469 / DSM 13698 / CCUG 18766 / IAM 14443 / JCM 21226 / LMG 7866 / NBRC 102419 / NCTC 12128 / CDC 0568-73)).